Consider the following 146-residue polypeptide: uncharacterized protein (146 aa).

The first 24 residues, 1–24 (MVIYYGKKNCTLLLLLFILCNIYS), serve as a signal peptide directing secretion. N-linked (GlcNAc...) asparagine glycosylation is found at N99 and N106.

This is an uncharacterized protein from Saccharomyces cerevisiae (strain ATCC 204508 / S288c) (Baker's yeast).